Consider the following 4351-residue polypeptide: Protocadherin Fat 2 (4351 aa).

Residues 1–18 (MTLVLLGVAMVLLHRAAC) form the signal peptide. At 19-4050 (EKPLEETITP…IKRGDWGQQE (4032 aa)) the chain is on the extracellular side. Cadherin domains are found at residues 34 to 148 (THSL…KPLF) and 149 to 256 (SPPS…PPVI). N-linked (GlcNAc...) asparagine glycans are attached at residues N39, N210, N280, and N330. Cadherin domains follow at residues 363 to 458 (EKAV…APVF), 459 to 564 (NRSS…QPMF), 565 to 669 (EEVN…VPVQ), 716 to 820 (DHFP…PPRF), 821 to 925 (PPGG…PPQC), 926 to 1032 (ITEH…SPHF), 1033 to 1142 (SSFV…RPVF), 1138 to 1242 (SRPV…SPMF), 1243 to 1346 (SHKL…SSIP), 1350 to 1448 (DESH…RPQF), 1449 to 1555 (LQDH…SPHF), 1556 to 1660 (TQPR…APIF), 1661 to 1758 (SKDE…APAF), 1759 to 1872 (LKST…PPRF), 1873 to 1968 (SEQI…SLQF), 1969 to 2070 (DQDI…IPEF), 2071 to 2171 (QHLP…NPLF), 2172 to 2272 (QSPY…PPTF), 2273 to 2379 (SQLV…PPEF), 2380 to 2481 (REPQ…SPEF), 2482 to 2585 (QQNV…APQF), 2586 to 2692 (KASG…LPKF), 2693 to 2799 (SEPL…RPVF), 2800 to 2908 (EADP…PPRF), 2909 to 3013 (ASED…SPQC), 3014 to 3115 (SQLL…APRF), 3116 to 3220 (FPSH…LPIF), 3221 to 3323 (LNSE…HPRF), 3324 to 3428 (THDL…PPRF), 3429 to 3533 (FQLN…PPST), and 3534 to 3631 (LPLE…APQQ). N-linked (GlcNAc...) asparagine glycans are attached at residues N459, N568, N627, and N789. Residue N996 is glycosylated (N-linked (GlcNAc...) asparagine). N1175, N1276, and N1417 each carry an N-linked (GlcNAc...) asparagine glycan. N1899, N1998, N2007, N2102, N2165, N2183, N2325, N2368, N2387, N2430, N2470, N2547, and N2597 each carry an N-linked (GlcNAc...) asparagine glycan. N-linked (GlcNAc...) asparagine glycans are attached at residues N3127, N3278, and N3312. N3432, N3603, N3770, N3774, N3815, N3842, N3875, and N3906 each carry an N-linked (GlcNAc...) asparagine glycan. In terms of domain architecture, Laminin G-like spans 3775–3946 (GTTWRFSGQS…YLETWALSQC (172 aa)). 4 disulfide bridges follow: C3914/C3946, C3953/C3964, C3958/C3974, and C3976/C3985. 2 consecutive EGF-like domains span residues 3949–3986 (PGTT…RNCE) and 3988–4024 (GREN…DRCE). A glycan (N-linked (GlcNAc...) asparagine) is linked at N3991. Intrachain disulfides connect C3992–C4003, C3997–C4012, and C4014–C4023. The chain crosses the membrane as a helical span at residues 4051 to 4071 (FLVIIVALPLLIIATVGLLLY). Residues 4072 to 4351 (CRRCKSHKPV…DYGSCEEVMF (280 aa)) are Cytoplasmic-facing. A disordered region spans residues 4313–4340 (DCEVNGGPAPGRSQPRAPPNYEGSDMVE).

As to quaternary structure, homodimer.

The protein resides in the cell membrane. It is found in the cell junction. It localises to the golgi apparatus. Its subcellular location is the trans-Golgi network. Involved in the regulation of cell migration. May be involved in mediating the organization of the parallel fibers of granule cells during cerebellar development. The protein is Protocadherin Fat 2 (Fat2) of Mus musculus (Mouse).